The chain runs to 171 residues: Calcium channel flower homolog (171 aa).

The Cytoplasmic segment spans residues 1–31 (MSGSVAAGAAAGPVPPAQEEGMTWWYRWLCR). A helical membrane pass occupies residues 32–52 (LAGVLGAVSCAISGLFNCVTI). Residues 53–56 (HPLN) are Extracellular-facing. A helical transmembrane segment spans residues 57-77 (IAAGVWMIMNAFILLLCEAPF). Residues 78–101 (CCQFVEFANTVAEKVDRLRSWQKA) lie on the Cytoplasmic side of the membrane. A helical transmembrane segment spans residues 102–122 (VFYCGMAIVPIVMSLTLTTLL). The Extracellular portion of the chain corresponds to 123–124 (GN). Residues 125–141 (AIAFATGVLYGLSALGK) traverse the membrane as a helical segment. Residues 142 to 171 (KGDAISYARIQQQRQQADEEKLAETFEGEL) are Cytoplasmic-facing.

It belongs to the calcium channel flower family. As to quaternary structure, interacts with adaptor protein complex 2 (AP-2). Expressed in calyces in the brain (at protein level). Detected in cultured hippocampal neurons (at protein level).

The protein resides in the cell membrane. Its subcellular location is the cytoplasmic vesicle. It is found in the secretory vesicle. The protein localises to the synaptic vesicle. It localises to the golgi apparatus. The protein resides in the vesicle. In terms of biological role, transmembrane protein which mediates synaptic endocytosis and fitness-based cell culling. In response to different stimulus strengths, controls two major modes of synaptic vesicle (SV) retrieval in hippocampal neurons; Clathrin-mediated endocytosis (CME) in response to mild stimulation and activity-dependent bulk endocytosis (ADBE) in response to strong stimulation. In cytotoxic T-lymphoocytes (CTLs) facilitates calcium-dependent endocytosis of cytotoxic granules (CGs) at the immuno synapse. Different isoforms work as fitness fingerprints in 'loser' and 'winner' cells and thereby mediate win/lose decisions as part of the cell competition process. This chain is Calcium channel flower homolog (Cacfd1), found in Rattus norvegicus (Rat).